Reading from the N-terminus, the 145-residue chain is MNGYEAYMKELAQQMRAELTDNGFTSLETSDDVNQYMQNIDNDDTTFVVINSTCGCAAGLARPAAVAVAEQNEVKPDHKVTVFAGQDKEATQTMRDYIQQVPSSPSYALFKGQHLVHFIPREHIEGRDINDIAMDLKDAFDDNCQ.

It belongs to the bacilliredoxin family.

The polypeptide is Bacilliredoxin SERP1006 (Staphylococcus epidermidis (strain ATCC 35984 / DSM 28319 / BCRC 17069 / CCUG 31568 / BM 3577 / RP62A)).